Consider the following 677-residue polypeptide: DNA ligase (677 aa).

NAD(+) contacts are provided by residues 36–40 (DAEYD), 85–86 (SI), and Glu-122. Lys-124 serves as the catalytic N6-AMP-lysine intermediate. The NAD(+) site is built by Arg-145, Glu-181, Lys-298, and Lys-322. Cys-416, Cys-419, Cys-434, and Cys-440 together coordinate Zn(2+). The region spanning 600 to 677 (LTPRPLAGKT…DEAALRALLD (78 aa)) is the BRCT domain.

The protein belongs to the NAD-dependent DNA ligase family. LigA subfamily. It depends on Mg(2+) as a cofactor. Mn(2+) is required as a cofactor.

The enzyme catalyses NAD(+) + (deoxyribonucleotide)n-3'-hydroxyl + 5'-phospho-(deoxyribonucleotide)m = (deoxyribonucleotide)n+m + AMP + beta-nicotinamide D-nucleotide.. In terms of biological role, DNA ligase that catalyzes the formation of phosphodiester linkages between 5'-phosphoryl and 3'-hydroxyl groups in double-stranded DNA using NAD as a coenzyme and as the energy source for the reaction. It is essential for DNA replication and repair of damaged DNA. This is DNA ligase from Methylibium petroleiphilum (strain ATCC BAA-1232 / LMG 22953 / PM1).